A 282-amino-acid polypeptide reads, in one-letter code: Short-chain dehydrogenase/reductase prx7 (282 aa).

NADP(+)-binding residues include asparagine 23, asparagine 70, tyrosine 150, lysine 154, valine 183, and threonine 185. The active-site Proton acceptor is tyrosine 150. Lysine 154 acts as the Lowers pKa of active site Tyr in catalysis.

Belongs to the short-chain dehydrogenases/reductases (SDR) family.

The protein operates within sesquiterpene biosynthesis. In terms of biological role, short-chain dehydrogenase/reductase; part of the gene cluster that mediates the biosynthesis of PR-toxin, a bicyclic sesquiterpene belonging to the eremophilane class and acting as a mycotoxin. The first step of the pathway is catalyzed by the aristolochene synthase which performs the cyclization of trans,trans-farnesyl diphosphate (FPP) to the bicyclic sesquiterpene aristolochene. Following the formation of aristolochene, the non-oxygenated aristolochene is converted to the trioxygenated intermediate eremofortin B, via 7-epi-neopetasone. This conversion appears to involve three enzymes, a hydroxysterol oxidase-like enzyme, the quinone-oxidase prx3 that forms the quinone-type-structure in the bicyclic nucleus of aristolochene with the C8-oxo group and the C-3 hydroxyl group, and the P450 monooxygenase prx9 that introduces the epoxide at the double bond between carbons 1 and 2. No monoxy or dioxy-intermediates have been reported to be released to the broth, so these three early oxidative reactions may be coupled together. Eremofortin B is further oxidized by another P450 monooxygenase, that introduces a second epoxide between carbons 7 and 11 prior to acetylation to eremofortin A by the acetyltransferase prx11. The second epoxidation may be performed by a second P450 monooxygenase. After the acetylation step, eremofortin A is converted to eremofortin C and then to PR-toxin. First the conversion of eremofortin A to eremofortin C proceeds by oxidation of the side chain of the molecule at C-12 and is catalyzed by the short-chain oxidoreductase prx1. The cytochrome P450 monooxygenase prx8 also plays a role in this step. The primary alcohol formed at C-12 is finally oxidized by the short-chain alcohol dehydrogenase prx4 that forms PR-toxin. The sequence is that of Short-chain dehydrogenase/reductase prx7 from Penicillium rubens (strain ATCC 28089 / DSM 1075 / NRRL 1951 / Wisconsin 54-1255) (Penicillium chrysogenum).